Reading from the N-terminus, the 410-residue chain is D-amino acid dehydrogenase (410 aa).

G9 to G14 lines the FAD pocket.

It belongs to the DadA oxidoreductase family. Requires FAD as cofactor.

The protein localises to the cell inner membrane. The catalysed reaction is a D-alpha-amino acid + a quinone + H2O = a 2-oxocarboxylate + a quinol + NH4(+). Its activity is regulated as follows. Activity is markedly inhibited by benzoate, and moderately by SH reagents such as p-hydroxymercuribenzoate, iodoacetamide, and iodoacetate. Its function is as follows. Catalyzes the oxidative deamination of D-amino acids. Has broad substrate specificity; is mostly active on D-proline, and to a lesser extent, on several other D-amino acids such as D-alanine, D-phenylalanine and D-serine. Mediates electron transport from D-proline to coenzyme Q1 in vitro, and is involved in the electron transport chain from D-proline to the c-type cytochrome in vivo. This Helicobacter pylori (Campylobacter pylori) protein is D-amino acid dehydrogenase.